Consider the following 165-residue polypeptide: Minor capsid protein VP2 (165 aa).

Belongs to the sapovirus VP2 family. As to quaternary structure, homooligomer. The portal-like structure consists in 12 copies of VP2. Interacts with capsid protein VP1.

The protein localises to the virion. Its subcellular location is the host cytoplasm. Functionally, minor structural protein that forms a portal-like structure at a unique three-fold axis of symmetry, following binding to the host receptor. The channel formed by VP2 may allow the delivery of the viral genome through the host endosomal membrane. The polypeptide is Minor capsid protein VP2 (Homo sapiens (Human)).